The primary structure comprises 426 residues: Trophoblast glycoprotein (426 aa).

Positions 1 to 31 are cleaved as a signal peptide; the sequence is MPGAGSRGPSAGDGRLRLARLALVLLGWVSA. Residues 32–361 are Extracellular-facing; it reads SAPSSSLPSS…ATLPQSLQTS (330 aa). Residues 34–51 show a composition bias toward low complexity; it reads PSSSLPSSSTSPAAFLAS. The tract at residues 34-54 is disordered; it reads PSSSLPSSSTSPAAFLASGSA. An LRRNT domain is found at 53–91; sequence SAQPPPAERCPAACECSEAARTVKCVNRNLLEVPADLPP. Disulfide bonds link C62–C68 and C66–C77. LRR repeat units follow at residues 92–113, 116–139, and 141–163; these read YVRN…AFAR, PLAD…GAFE, and LPGL…FTFA. An N-linked (GlcNAc...) asparagine glycan is attached at N124. N-linked (GlcNAc...) asparagine glycosylation is present at N166. 4 LRR repeats span residues 172 to 210, 215 to 238, 239 to 261, and 262 to 281; these read PSPL…AALR, LRGL…LLDQ, LPSL…ASFR, and NLTH…VLHN. N-linked (GlcNAc...) asparagine glycosylation is present at N281. Residues 289–352 form the LRRCT domain; sequence GLAHVRVFLD…LTSSDLDCDA (64 aa). Intrachain disulfides connect C304–C329 and C306–C350. The helical transmembrane segment at 362-382 threads the bilayer; that stretch reads YVFLGIVLALIGAIFLLVLYL. Residues 383–426 are Cytoplasmic-facing; sequence NRKGIKKWMHNIRDACRDHMEGYHYRYEINADPRLTNLSSNSDV. Position 424 is a phosphoserine (S424).

Post-translationally, highly glycosylated.

It localises to the cell membrane. Functionally, may function as an inhibitor of Wnt/beta-catenin signaling by indirectly interacting with LRP6 and blocking Wnt3a-dependent LRP6 internalization. In Rattus norvegicus (Rat), this protein is Trophoblast glycoprotein (Tpbg).